Reading from the N-terminus, the 139-residue chain is Orientotoxin-2 (139 aa).

Expressed by the venom gland.

The protein localises to the secreted. It catalyses the reaction a 1,2-diacyl-sn-glycero-3-phosphocholine + H2O = a 1-acyl-sn-glycero-3-phosphocholine + a fatty acid + H(+). Has a highly toxic phospholipase A2 activity. The protein is Orientotoxin-2 of Vespa orientalis (Oriental hornet).